The primary structure comprises 181 residues: ATP synthase subunit b (181 aa).

The helical transmembrane segment at 16-36 (LIPPIPELVIGLIAFVIVFGF) threads the bilayer.

The protein belongs to the ATPase B chain family. In terms of assembly, F-type ATPases have 2 components, F(1) - the catalytic core - and F(0) - the membrane proton channel. F(1) has five subunits: alpha(3), beta(3), gamma(1), delta(1), epsilon(1). F(0) has three main subunits: a(1), b(2) and c(10-14). The alpha and beta chains form an alternating ring which encloses part of the gamma chain. F(1) is attached to F(0) by a central stalk formed by the gamma and epsilon chains, while a peripheral stalk is formed by the delta and b chains.

It localises to the cell membrane. Functionally, f(1)F(0) ATP synthase produces ATP from ADP in the presence of a proton or sodium gradient. F-type ATPases consist of two structural domains, F(1) containing the extramembraneous catalytic core and F(0) containing the membrane proton channel, linked together by a central stalk and a peripheral stalk. During catalysis, ATP synthesis in the catalytic domain of F(1) is coupled via a rotary mechanism of the central stalk subunits to proton translocation. Component of the F(0) channel, it forms part of the peripheral stalk, linking F(1) to F(0). This chain is ATP synthase subunit b, found in Streptomyces lividans.